We begin with the raw amino-acid sequence, 117 residues long: uncharacterized protein (117 aa).

This is an uncharacterized protein from Fowlpox virus (strain NVSL) (FPV).